The sequence spans 239 residues: 4-hydroxy-tetrahydrodipicolinate reductase (239 aa).

NAD(+) is bound by residues aspartate 32, 73 to 75 (GTT), and 98 to 101 (ASNF). Histidine 133 acts as the Proton donor/acceptor in catalysis. Residue histidine 134 coordinates (S)-2,3,4,5-tetrahydrodipicolinate. Lysine 137 functions as the Proton donor in the catalytic mechanism. 143–144 (GT) lines the (S)-2,3,4,5-tetrahydrodipicolinate pocket.

The protein belongs to the DapB family.

The protein localises to the cytoplasm. The enzyme catalyses (S)-2,3,4,5-tetrahydrodipicolinate + NAD(+) + H2O = (2S,4S)-4-hydroxy-2,3,4,5-tetrahydrodipicolinate + NADH + H(+). It carries out the reaction (S)-2,3,4,5-tetrahydrodipicolinate + NADP(+) + H2O = (2S,4S)-4-hydroxy-2,3,4,5-tetrahydrodipicolinate + NADPH + H(+). Its pathway is amino-acid biosynthesis; L-lysine biosynthesis via DAP pathway; (S)-tetrahydrodipicolinate from L-aspartate: step 4/4. In terms of biological role, catalyzes the conversion of 4-hydroxy-tetrahydrodipicolinate (HTPA) to tetrahydrodipicolinate. This is 4-hydroxy-tetrahydrodipicolinate reductase from Christiangramia forsetii (strain DSM 17595 / CGMCC 1.15422 / KT0803) (Gramella forsetii).